We begin with the raw amino-acid sequence, 651 residues long: Tudor domain-containing protein 3 (651 aa).

The 41-residue stretch at 193-233 folds into the UBA domain; sequence LVDEKALKHITEMGFSKEASRQALMDNGNNLEAALNVLLTS. Disordered stretches follow at residues 234-271, 287-369, and 381-450; these read NKQK…SAPS, EEPK…VSEV, and YSRY…TSIP. Serine 256 is modified (phosphoserine). The segment covering 291–312 has biased composition (polar residues); sequence SQPQQLHQGQYRSSNTEQNGVK. Residues 313-338 are compositionally biased toward basic and acidic residues; it reads DNNHLRHPPRNDTRQPRNEKPPRFQR. Serine 345 is subject to Phosphoserine. A Glycyl lysine isopeptide (Lys-Gly) (interchain with G-Cter in SUMO2) cross-link involves residue lysine 470. A Tudor domain is found at 555 to 615; it reads MWKPGDECFA…KPIQTEAWEE (61 aa). Residues 624-633 are compositionally biased toward basic and acidic residues; the sequence is EFRRGGDGQP. A disordered region spans residues 624–651; the sequence is EFRRGGDGQPRRSTRPTQQFYQPPRARN. The tract at residues 631-651 is EBM motif; may mediate interaction with the EJC; sequence GQPRRSTRPTQQFYQPPRARN.

Component of mRNA stress granules. Interacts with FMR1, FXR1, FXR2, EWSR1, FUS, SERBP1, EEF1A1 and DDX3X or DDX3Y, and with the small nuclear ribonucleoprotein-associated proteins SNRPB and SNRPN. Interacts with 'Lys-48'-linked tetra-ubiquitin, but not with monoubiquitin or 'Lys-63'-linked ubiquitin chains. May interact with the exon junction complex (EJC) composed at least of CASC3, EIF4A3, MAGOH and RBM8A. Interacts with POLR2A (via the C-terminal domain (CTD)). Probably cleaved by enteroviral 2A proteinase. As to expression, detected in heart, brain, placenta, lung, liver, skeletal muscle, kidney and pancreas.

The protein localises to the cytoplasm. Its subcellular location is the nucleus. In terms of biological role, scaffolding protein that specifically recognizes and binds dimethylarginine-containing proteins. Plays a role in the regulation of translation of target mRNAs by binding Arg/Gly-rich motifs (GAR) in dimethylarginine-containing proteins. In nucleus, acts as a coactivator: recognizes and binds asymmetric dimethylation on the core histone tails associated with transcriptional activation (H3R17me2a and H4R3me2a) and recruits proteins at these arginine-methylated loci. In cytoplasm, acts as an antiviral factor that participates in the assembly of stress granules together with G3BP1. This chain is Tudor domain-containing protein 3 (TDRD3), found in Homo sapiens (Human).